The chain runs to 36 residues: Cytochrome b6-f complex subunit 7 (36 aa).

Residues 9-29 traverse the membrane as a helical segment; the sequence is NGAFIMIGLTLLGLAWGFVII.

This sequence belongs to the PetM family. As to quaternary structure, the 4 large subunits of the cytochrome b6-f complex are cytochrome b6, subunit IV (17 kDa polypeptide, PetD), cytochrome f and the Rieske protein, while the 4 small subunits are PetG, PetL, PetM and PetN. The complex functions as a dimer.

The protein resides in the cellular thylakoid membrane. Component of the cytochrome b6-f complex, which mediates electron transfer between photosystem II (PSII) and photosystem I (PSI), cyclic electron flow around PSI, and state transitions. This chain is Cytochrome b6-f complex subunit 7, found in Synechocystis sp. (strain ATCC 27184 / PCC 6803 / Kazusa).